Consider the following 285-residue polypeptide: Glutamate racemase (285 aa).

Substrate is bound by residues 28–29 and 60–61; these read DS and YG. Residue cysteine 92 is the Proton donor/acceptor of the active site. 93-94 is a substrate binding site; that stretch reads NT. Residue cysteine 204 is the Proton donor/acceptor of the active site. Position 205–206 (205–206) interacts with substrate; that stretch reads TH.

Belongs to the aspartate/glutamate racemases family.

It catalyses the reaction L-glutamate = D-glutamate. It functions in the pathway cell wall biogenesis; peptidoglycan biosynthesis. Its function is as follows. Provides the (R)-glutamate required for cell wall biosynthesis. This chain is Glutamate racemase, found in Escherichia fergusonii (strain ATCC 35469 / DSM 13698 / CCUG 18766 / IAM 14443 / JCM 21226 / LMG 7866 / NBRC 102419 / NCTC 12128 / CDC 0568-73).